The following is a 344-amino-acid chain: Meiotic expression up-regulated protein 26 (344 aa).

It localises to the nucleus. This is Meiotic expression up-regulated protein 26 (meu26) from Schizosaccharomyces pombe (strain 972 / ATCC 24843) (Fission yeast).